Here is a 124-residue protein sequence, read N- to C-terminus: Putative RNA polymerase II transcriptional coactivator (124 aa).

The tract at residues 1 to 61 (MSSSSSSEDE…GRLKDSDGNE (61 aa)) is disordered. 2 stretches are compositionally biased toward basic and acidic residues: residues 11–21 (LEKKVTKEQKK) and 39–58 (QEVK…KDSD).

It belongs to the transcriptional coactivator PC4 family.

It localises to the nucleus. Its function is as follows. General coactivator that functions cooperatively with TAFs and mediates functional interactions between upstream activators and the general transcriptional machinery. Binds single-stranded DNA. The protein is Putative RNA polymerase II transcriptional coactivator of Caenorhabditis elegans.